Reading from the N-terminus, the 274-residue chain is Glutamate--cysteine ligase regulatory subunit (274 aa).

Serine 59 bears the Phosphoserine mark. Position 263 is an N6-acetyllysine (lysine 263).

It belongs to the aldo/keto reductase family. Glutamate--cysteine ligase light chain subfamily. Heterodimer of a catalytic heavy chain and a regulatory light chain.

It functions in the pathway sulfur metabolism; glutathione biosynthesis; glutathione from L-cysteine and L-glutamate: step 1/2. This Bos taurus (Bovine) protein is Glutamate--cysteine ligase regulatory subunit (GCLM).